A 138-amino-acid polypeptide reads, in one-letter code: Putative membrane protein ORF6 (138 aa).

2 helical membrane passes run 4–20 and 37–53; these read LTIIFLLSGLTAYHAVL and VVVLVMIGALLTLLMTI.

The protein resides in the membrane. In Ictalurid herpesvirus 1 (strain Auburn) (IcHV-1), this protein is Putative membrane protein ORF6 (ORF6).